A 198-amino-acid chain; its full sequence is A-type ATP synthase subunit E (198 aa).

Belongs to the V-ATPase E subunit family. Has multiple subunits with at least A(3), B(3), C, D, E, F, H, I and proteolipid K(x).

It localises to the cell membrane. In terms of biological role, component of the A-type ATP synthase that produces ATP from ADP in the presence of a proton gradient across the membrane. The polypeptide is A-type ATP synthase subunit E (Pyrococcus horikoshii (strain ATCC 700860 / DSM 12428 / JCM 9974 / NBRC 100139 / OT-3)).